The sequence spans 443 residues: Mitochondrial enolase superfamily member 1 (443 aa).

Substrate is bound by residues 24-26 (GAD) and Tyr34. Residue Ser148 is modified to Phosphoserine. Residue Lys220 coordinates substrate. Lys222 functions as the Proton donor/acceptor in the catalytic mechanism. Asp250 contributes to the Mg(2+) binding site. Residues Asn252, Glu276, Glu305, 355-357 (HAG), and Glu386 each bind substrate. 2 residues coordinate Mg(2+): Glu276 and Glu305. Residue His355 is part of the active site.

It belongs to the mandelate racemase/muconate lactonizing enzyme family. ENOSF1 subfamily. It depends on Mg(2+) as a cofactor. Post-translationally, could be sumoylated.

The protein resides in the mitochondrion. It carries out the reaction L-fuconate = 2-dehydro-3-deoxy-L-fuconate + H2O. Plays a role in the catabolism of L-fucose, a sugar that is part of the carbohydrates that are attached to cellular glycoproteins. Catalyzes the dehydration of L-fuconate to 2-keto-3-deoxy-L-fuconate by the abstraction of the 2-proton to generate an enediolate intermediate that is stabilized by the magnesium ion. The chain is Mitochondrial enolase superfamily member 1 (ENOSF1) from Homo sapiens (Human).